A 328-amino-acid chain; its full sequence is Reticulocalbin-3 (328 aa).

The first 20 residues, 1-20, serve as a signal peptide directing secretion; that stretch reads MMWRPSVLLLLLLLRHGAQG. Residues 19 to 49 form a disordered region; that stretch reads QGKPSPDAGPHGQGRVHQAAPLSDAPHDDAH. 6 consecutive EF-hand domains span residues 75 to 112, 113 to 148, 163 to 198, 200 to 235, 241 to 276, and 277 to 312; these read ESQA…TQQR, HIRD…HYAP, KMLA…EEFP, MRDI…AEPG, WVQT…PAQD, and QPLV…FVGS. Positions 92, 94, 96, 101, 126, 128, 130, 132, and 137 each coordinate Ca(2+). Asn-140 carries N-linked (GlcNAc...) asparagine glycosylation. 20 residues coordinate Ca(2+): Asp-176, Asp-178, Asp-180, Met-182, Glu-187, Asp-213, Asn-215, Asp-217, Tyr-219, Glu-224, Asp-254, Asn-256, Asp-258, His-260, Glu-265, Asp-290, Asp-292, Asp-294, Arg-296, and Glu-301. Residues 325–328 carry the Prevents secretion from ER motif; the sequence is HDEL.

It belongs to the CREC family. As to quaternary structure, interacts with PCSK6 (immature form including the propeptide); probably involved in the maturation and the secretion of PCSK6. Post-translationally, degraded by PCSK6 and other endoproteases including FURIN and PCSK5. N-glycosylated. As to expression, widely expressed.

The protein resides in the endoplasmic reticulum lumen. Functionally, probable molecular chaperone assisting protein biosynthesis and transport in the endoplasmic reticulum. Required for the proper biosynthesis and transport of pulmonary surfactant-associated protein A/SP-A, pulmonary surfactant-associated protein D/SP-D and the lipid transporter ABCA3. By regulating both the proper expression and the degradation through the endoplasmic reticulum-associated protein degradation pathway of these proteins plays a crucial role in pulmonary surfactant homeostasis. Has an anti-fibrotic activity by negatively regulating the secretion of type I and type III collagens. This calcium-binding protein also transiently associates with immature PCSK6 and regulates its secretion. This Homo sapiens (Human) protein is Reticulocalbin-3.